We begin with the raw amino-acid sequence, 354 residues long: Opsin-5 (354 aa).

Residues 1–33 (MALNHTALPQDERLPHYLRDGDPFASKLSWEAD) lie on the Extracellular side of the membrane. A glycan (N-linked (GlcNAc...) asparagine) is linked at Asn4. The chain crosses the membrane as a helical span at residues 34–54 (LVAGFYLTIIGILSTFGNGYV). The Cytoplasmic portion of the chain corresponds to 55–74 (LYMSSRRKKKLRPAEIMTIN). A helical transmembrane segment spans residues 75–95 (LAVCDLGISVVGKPFTIISCF). Residues 96-108 (CHRWVFGWIGCRW) lie on the Extracellular side of the membrane. An intrachain disulfide couples Cys106 to Cys183. Residues 109-129 (YGWAGFFFGCGSLITMTAVSL) form a helical membrane-spanning segment. At 130–150 (DRYLKICYLSYGVWLKRKHAY) the chain is on the cytoplasmic side. A helical membrane pass occupies residues 151-171 (ICLAAIWAYASFWTTMPLVGL). The Extracellular segment spans residues 172–197 (GDYVPEPFGTSCTLDWWLAQASVGGQ). The chain crosses the membrane as a helical span at residues 198–218 (VFILNILFFCLLLPTAVIVFS). Residues 219 to 252 (YVKIIAKVKSSSKEVAHFDSRIHSSHVLEMKLTK) lie on the Cytoplasmic side of the membrane. A helical membrane pass occupies residues 253–273 (VAMLICAGFLIAWIPYAVVSV). Topologically, residues 274-288 (WSAFGRPDSIPIQLS) are extracellular. Residues 289–309 (VVPTLLAKSAAMYNPIIYQVI) traverse the membrane as a helical segment. Lys296 is modified (N6-(retinylidene)lysine). Residues 310 to 353 (DYKFACCQTGGLKATKKKSLEGFRLHTVTTVRKSSAVLEIHEEW) lie on the Cytoplasmic side of the membrane. Residues Cys315 and Cys316 are each lipidated (S-palmitoyl cysteine).

This sequence belongs to the G-protein coupled receptor 1 family. Opsin subfamily. In terms of processing, it is uncertain whether Cys-315 or Cys-316 is palmitoylated. In terms of tissue distribution, detected in brain and retina and cell lines derived from neural retina.

The protein localises to the cell membrane. Its function is as follows. G-protein coupled receptor which selectively activates G(i) type G proteins via ultraviolet A (UVA) light-mediated activation in the retina. Preferentially binds the chromophore 11-cis retinal and is a bistable protein that displays emission peaks at 380 nm (UVA light) and 470 nm (blue light). Required for the light-response in the inner plexiform layer, and contributes to the regulation of the light-response in the nerve fiber layer, via phosphorylated DAT/SLC6A3 dopamine uptake. Involved in local corneal and retinal circadian rhythm photoentrainment via modulation of the UVA light-induced phase-shift of the retina clock. Acts as a circadian photoreceptor in the outer ear, via modulation of circadian clock-gene expression in response to violet light during the light-to-dark transition phase and night phase of the circadian cycle. Required in the retina to negatively regulate hyaloid vessel regression during postnatal development via light-dependent OPN5-SLC32A1-DRD2-VEGFR2 signaling. Involved in the light-dependent regulation of retina and vitreous compartment dopamine levels. The polypeptide is Opsin-5 (OPN5) (Homo sapiens (Human)).